Reading from the N-terminus, the 600-residue chain is Glutamine--fructose-6-phosphate aminotransferase [isomerizing] (600 aa).

Catalysis depends on Cys2, which acts as the Nucleophile; for GATase activity. The Glutamine amidotransferase type-2 domain maps to 2-217; that stretch reads CGIVGFIGEQ…DKEIVIVTKE (216 aa). SIS domains are found at residues 283–422 and 452–590; these read IRNA…AKGE and LAKQ…VDKP. The active-site For Fru-6P isomerization activity is Lys595.

In terms of assembly, homodimer.

The protein resides in the cytoplasm. It carries out the reaction D-fructose 6-phosphate + L-glutamine = D-glucosamine 6-phosphate + L-glutamate. Its function is as follows. Catalyzes the first step in hexosamine metabolism, converting fructose-6P into glucosamine-6P using glutamine as a nitrogen source. This Bacillus cereus (strain ATCC 14579 / DSM 31 / CCUG 7414 / JCM 2152 / NBRC 15305 / NCIMB 9373 / NCTC 2599 / NRRL B-3711) protein is Glutamine--fructose-6-phosphate aminotransferase [isomerizing].